Reading from the N-terminus, the 534-residue chain is Protein BFR2 (534 aa).

Residues 27–148 (ENASLFQHNE…ETEEAQQKRH (122 aa)) form a disordered region. 2 positions are modified to phosphoserine: serine 41 and serine 44. Residues 52-77 (EETKKAHYLEVEKSKLRAEKGLELND) are compositionally biased toward basic and acidic residues. Residues 86-161 (SRQALYEEVS…KLIQQETKQA (76 aa)) adopt a coiled-coil conformation. Acidic residues-rich tracts occupy residues 93–114 (EVSE…EEDA) and 121–142 (SEDE…ETEE). Residues serine 366, serine 372, and serine 379 each carry the phosphoserine modification.

The protein belongs to the AATF family.

Its subcellular location is the nucleus. It is found in the nucleolus. Involved in endoplasmic reticulum to Golgi transport. Involved in a protein-transport step blocked by brefeldin A, which disrupts the Golgi apparatus and its incoming protein flux. May also be involved for mass growth or cell proliferation. This Saccharomyces cerevisiae (strain ATCC 204508 / S288c) (Baker's yeast) protein is Protein BFR2 (BFR2).